The chain runs to 343 residues: Oxygen-dependent coproporphyrinogen-III oxidase (343 aa).

Serine 99 provides a ligand contact to substrate. A divalent metal cation is bound by residues histidine 103 and histidine 113. Histidine 113 functions as the Proton donor in the catalytic mechanism. 115–117 (NYR) contacts substrate. Residues histidine 147 and histidine 177 each coordinate a divalent metal cation. Positions 267–302 (YVEFNLVWDRGTIFGLQTNGRTESILMSLPPLARWE) are important for dimerization.

It belongs to the aerobic coproporphyrinogen-III oxidase family. Homodimer. A divalent metal cation is required as a cofactor.

It localises to the cytoplasm. It carries out the reaction coproporphyrinogen III + O2 + 2 H(+) = protoporphyrinogen IX + 2 CO2 + 2 H2O. Its pathway is porphyrin-containing compound metabolism; protoporphyrin-IX biosynthesis; protoporphyrinogen-IX from coproporphyrinogen-III (O2 route): step 1/1. Its function is as follows. Involved in the heme and chlorophyll biosynthesis. Catalyzes the aerobic oxidative decarboxylation of propionate groups of rings A and B of coproporphyrinogen-III to yield the vinyl groups in protoporphyrinogen-IX. In Prochlorococcus marinus (strain SARG / CCMP1375 / SS120), this protein is Oxygen-dependent coproporphyrinogen-III oxidase.